A 473-amino-acid polypeptide reads, in one-letter code: UDP-N-acetylmuramate--L-alanine ligase (473 aa).

Position 115–121 (115–121 (GTHGKTT)) interacts with ATP.

It belongs to the MurCDEF family.

It localises to the cytoplasm. It carries out the reaction UDP-N-acetyl-alpha-D-muramate + L-alanine + ATP = UDP-N-acetyl-alpha-D-muramoyl-L-alanine + ADP + phosphate + H(+). It participates in cell wall biogenesis; peptidoglycan biosynthesis. In terms of biological role, cell wall formation. This Rhizorhabdus wittichii (strain DSM 6014 / CCUG 31198 / JCM 15750 / NBRC 105917 / EY 4224 / RW1) (Sphingomonas wittichii) protein is UDP-N-acetylmuramate--L-alanine ligase.